A 245-amino-acid polypeptide reads, in one-letter code: MVFEVIPAVDMRGGKCVQLVQGVPGSEIVSIDDPVEVALDWVRKGAKTLHLVDLDGAIEGERKNAPIIEKIVSACQKKGVQIQVGGGIRSFEDAASLLELGVSRVILGTAALKNPELVQQLSSTFGNEHVTVALDAKNGKISIKGWTEECAQTPVEMGRKFEELGAGSLLFTNIDTEGLMQGVNPVPTKNLVESVSIPVIASGGVSSLQDLRTLKKTGASGVVVGSALYTGRFTLEAAIETTQQE.

Asp-10 acts as the Proton acceptor in catalysis. Asp-135 functions as the Proton donor in the catalytic mechanism.

Belongs to the HisA/HisF family.

Its subcellular location is the cytoplasm. The enzyme catalyses 1-(5-phospho-beta-D-ribosyl)-5-[(5-phospho-beta-D-ribosylamino)methylideneamino]imidazole-4-carboxamide = 5-[(5-phospho-1-deoxy-D-ribulos-1-ylimino)methylamino]-1-(5-phospho-beta-D-ribosyl)imidazole-4-carboxamide. Its pathway is amino-acid biosynthesis; L-histidine biosynthesis; L-histidine from 5-phospho-alpha-D-ribose 1-diphosphate: step 4/9. In Methanosarcina barkeri (strain Fusaro / DSM 804), this protein is 1-(5-phosphoribosyl)-5-[(5-phosphoribosylamino)methylideneamino] imidazole-4-carboxamide isomerase.